The chain runs to 896 residues: Desmocollin-3 (896 aa).

An N-terminal signal peptide occupies residues 1-26 (MAAPGSGAPCAELCRQLLLTLVVFSF). Residues 27–134 (ACEACKKEIF…KETVLRRSKR (108 aa)) constitute a propeptide that is removed on maturation. 5 Cadherin domains span residues 135–242 (RWAP…HPIF), 243–354 (TEAV…LPTF), 355–471 (RQNA…GPEC), 472–579 (SPEV…EILQ), and 580–690 (DYLV…ILGK). At 135–690 (RWAPIPCSMQ…RRSADVILGK (556 aa)) the chain is on the extracellular side. Asn165 carries an N-linked (GlcNAc...) asparagine glycan. 3 N-linked (GlcNAc...) asparagine glycosylation sites follow: Asn391, Asn546, and Asn629. Residues 691-711 (WAILAILLGIALLFSILLTLV) traverse the membrane as a helical segment. Over 712–896 (CGIVSARNKK…AALAKTCTKR (185 aa)) the chain is Cytoplasmic.

May form homodimers. Interacts with DSG1; there is evidence to suggest that the interaction promotes cell-cell adhesion of keratinocytes. Expressed in stratified epithelia only, such as the epidermis, tongue, esophagus and rumen (at protein level).

It is found in the cell membrane. It localises to the cell junction. Its subcellular location is the desmosome. The protein resides in the cytoplasm. A component of desmosome cell-cell junctions which are required for positive regulation of cellular adhesion. Required for cell-cell adhesion in the epidermis, as a result required for the maintenance of the dermal cohesion and the dermal barrier function. Required for cell-cell adhesion of epithelial cell layers surrounding the telogen hair club, as a result plays an important role in telogen hair shaft anchorage. Essential for successful completion of embryo compaction and embryo development. This is Desmocollin-3 (DSC3) from Bos taurus (Bovine).